The sequence spans 273 residues: Protein OPG070 (273 aa).

The next 2 helical transmembrane spans lie at 123 to 143 and 238 to 260; these read NEFISFLLLTSIPIYNILFWF and FLLFYVPGYSITTKITPAVEYLM.

The protein belongs to the orthopoxvirus OPG070 family. Phosphorylated by OPG054/F10L kinase in vitro.

It localises to the virion. The protein localises to the host endoplasmic reticulum membrane. It is found in the host cytoplasm. May play a role in the biogenesis of the viral factories by recruiting and wrapping DNA replication sites in endoplasmic reticulum derived membranes. Later in infection, phosphorylation by the late viral kinase OPG054/F10L might decrease DNA-binding ability and trigger ER membranes disassembly. Binds DNA in vitro. The protein is Protein OPG070 (OPG070) of Vaccinia virus (strain Western Reserve) (VACV).